The chain runs to 359 residues: Stearoyl-CoA desaturase (359 aa).

Over 1–72 (MPAHLLQEEI…EGPKPKLEYV (72 aa)) the chain is Cytoplasmic. The chain crosses the membrane as a helical span at residues 73–93 (WRNIILMGLLHLGALYGITLI). N75 serves as a coordination point for substrate. The Lumenal segment spans residues 94 to 97 (PTCK). The chain crosses the membrane as a helical span at residues 98–118 (IYTFLWVLFYYMMSALGITAG). Residues 119–217 (VHRLWSHRTY…EKLVMFQRRY (99 aa)) are Cytoplasmic-facing. H120 and H125 together coordinate Fe cation. Residues 120–125 (HRLWSH) carry the Histidine box-1 motif. Residues N148, R155, and D156 each coordinate substrate. Fe cation is bound by residues H157, H160, and H161. Positions 157–161 (HRAHH) match the Histidine box-2 motif. Substrate is bound by residues R188 and K189. Position 203 is a phosphoserine (S203). The chain crosses the membrane as a helical span at residues 218–237 (YKPGVLLLCFILPTLVPWYL). The Lumenal portion of the chain corresponds to 238–241 (WGET). The chain crosses the membrane as a helical span at residues 242-263 (FQNSLFFATLLRYAVVLNATWL). W262 contacts substrate. The Cytoplasmic segment spans residues 264–359 (VNSAAHMYGY…RTGEESCKSG (96 aa)). Fe cation is bound by residues H269, H298, H301, and H302. The short motif at 298–302 (HNYHH) is the Histidine box-3 element.

It belongs to the fatty acid desaturase type 1 family. Fe(2+) is required as a cofactor.

The protein resides in the endoplasmic reticulum membrane. The enzyme catalyses octadecanoyl-CoA + 2 Fe(II)-[cytochrome b5] + O2 + 2 H(+) = (9Z)-octadecenoyl-CoA + 2 Fe(III)-[cytochrome b5] + 2 H2O. It catalyses the reaction hexadecanoyl-CoA + 2 Fe(II)-[cytochrome b5] + O2 + 2 H(+) = (9Z)-hexadecenoyl-CoA + 2 Fe(III)-[cytochrome b5] + 2 H2O. Its function is as follows. Stearoyl-CoA desaturase that utilizes O(2) and electrons from reduced cytochrome b5 to introduce the first double bond into saturated fatty acyl-CoA substrates. Catalyzes the insertion of a cis double bond at the delta-9 position into fatty acyl-CoA substrates including palmitoyl-CoA and stearoyl-CoA. Gives rise to a mixture of 16:1 and 18:1 unsaturated fatty acids. Plays an important role in lipid biosynthesis. Plays an important role in regulating the expression of genes that are involved in lipogenesis and in regulating mitochondrial fatty acid oxidation. Plays an important role in body energy homeostasis. Contributes to the biosynthesis of membrane phospholipids, cholesterol esters and triglycerides. This chain is Stearoyl-CoA desaturase (SCD), found in Capra hircus (Goat).